The primary structure comprises 235 residues: Urease accessory protein UreF (235 aa).

This sequence belongs to the UreF family. As to quaternary structure, ureD, UreF and UreG form a complex that acts as a GTP-hydrolysis-dependent molecular chaperone, activating the urease apoprotein by helping to assemble the nickel containing metallocenter of UreC. The UreE protein probably delivers the nickel.

Its subcellular location is the cytoplasm. Required for maturation of urease via the functional incorporation of the urease nickel metallocenter. The protein is Urease accessory protein UreF of Psychrobacter cryohalolentis (strain ATCC BAA-1226 / DSM 17306 / VKM B-2378 / K5).